Consider the following 185-residue polypeptide: MSRIGKQPIAVPSGVTVNTQSGVFKVKGPKGELTVPFNPDLTIREDNGQLLVERPSDRQEHRALHGLTRTLVANAVKGVSDGFVINLELRGVGYRAKLNGKALELTIGYSHPVVIDPPAGVTFAVPEPTKIDVSGIDKQLVGQVAANVREVRKPDAYHGKGVRFVGQQIALKAGKAGATGGKGKK.

It belongs to the universal ribosomal protein uL6 family. Part of the 50S ribosomal subunit.

In terms of biological role, this protein binds to the 23S rRNA, and is important in its secondary structure. It is located near the subunit interface in the base of the L7/L12 stalk, and near the tRNA binding site of the peptidyltransferase center. The polypeptide is Large ribosomal subunit protein uL6 (Deinococcus deserti (strain DSM 17065 / CIP 109153 / LMG 22923 / VCD115)).